A 737-amino-acid chain; its full sequence is Autolysin (737 aa).

Positions methionine 1–lysine 13 are enriched in basic and acidic residues. Disordered regions lie at residues methionine 1–threonine 28, alanine 51–serine 132, and proline 335–asparagine 360. The N-terminal stretch at methionine 1–alanine 53 is a signal peptide. A compositionally biased stretch (low complexity) spans proline 67–threonine 117. Residues alanine 118 to serine 132 are compositionally biased toward polar residues. The span at glycine 339 to glycine 352 shows a compositional bias: gly residues. The region spanning threonine 361–valine 404 is the LysM 1 domain. The interval serine 409–threonine 429 is disordered. Gly residues predominate over residues glycine 410–glycine 419. Positions serine 420–threonine 429 are enriched in low complexity. LysM domains follow at residues threonine 429 to valine 472, threonine 497 to valine 540, threonine 565 to valine 608, threonine 631 to valine 674, and lysine 693 to valine 736.

This sequence belongs to the glycosyl hydrolase 73 family.

Its subcellular location is the secreted. Hydrolyzes the cell wall of E.faecalis and M.lysodeikticus. May play an important role in cell wall growth and cell separation. The sequence is that of Autolysin from Enterococcus faecalis (strain ATCC 700802 / V583).